The sequence spans 518 residues: Bifunctional purine biosynthesis protein PurH (518 aa).

The 146-residue stretch at 1-146 (MSPIALLSVS…KNHQDVLVVT (146 aa)) folds into the MGS-like domain.

The protein belongs to the PurH family.

It carries out the reaction (6R)-10-formyltetrahydrofolate + 5-amino-1-(5-phospho-beta-D-ribosyl)imidazole-4-carboxamide = 5-formamido-1-(5-phospho-D-ribosyl)imidazole-4-carboxamide + (6S)-5,6,7,8-tetrahydrofolate. The enzyme catalyses IMP + H2O = 5-formamido-1-(5-phospho-D-ribosyl)imidazole-4-carboxamide. Its pathway is purine metabolism; IMP biosynthesis via de novo pathway; 5-formamido-1-(5-phospho-D-ribosyl)imidazole-4-carboxamide from 5-amino-1-(5-phospho-D-ribosyl)imidazole-4-carboxamide (10-formyl THF route): step 1/1. The protein operates within purine metabolism; IMP biosynthesis via de novo pathway; IMP from 5-formamido-1-(5-phospho-D-ribosyl)imidazole-4-carboxamide: step 1/1. This is Bifunctional purine biosynthesis protein PurH from Prochlorococcus marinus (strain NATL2A).